The primary structure comprises 497 residues: MDPLGAPSQFVDVDTLPSWGNSCEDQLNASEIAAETYQEETIRSPFLYNKDINGKVVLWKGDVALLNCTAIVNTSNESLTDKNPVSESIFMLAGPDLKEDLQKLRGCRTGEAKLTKGFNLAARFIIHTVGPKYKSRYRTAAESSLYSCYRNVLQLAKEQSMSSVGFCVINSAKRGYPLEDATHIALRTVRRFLEIHGETLEKVVFAVSELEEATYQKLLPLYFPRSLKEESRSLPCLPADIGNAEGEPVVPERQIRISEKPGAPEDNQEEEDEGLGVDLSFIGSHAFARMEGDIDKQRRLILQGQLSEAALQKQHQRNYNRWLCQARSEDLSDIASLKALYQTGVDNCGRTVMVVVGRNIPVTLIDMDKALLYFIHVMDHIAVKEYVLVYFHTLTSEYNHLDSDFLKKLYDVVDVKYKRNLKAVYFVHPTFRSKVSTWFFTTFSVSGLKDKIHHVDSLHQLFSAISPEQIDFPPFVLEYDARENGPYYTSYLPSPDL.

In terms of domain architecture, Macro spans 43–223; that stretch reads RSPFLYNKDI…TYQKLLPLYF (181 aa). Residues 251-273 form a disordered region; sequence PERQIRISEKPGAPEDNQEEEDE. Basic and acidic residues predominate over residues 253-263; that stretch reads RQIRISEKPGA. Ser-280 is modified (phosphoserine). The CRAL-TRIO domain maps to 333–481; the sequence is DIASLKALYQ…FPPFVLEYDA (149 aa).

This sequence belongs to the GDAP2 family.

In Bos taurus (Bovine), this protein is Ganglioside-induced differentiation-associated protein 2 (GDAP2).